The primary structure comprises 247 residues: Cell division protein ZapD (247 aa).

This sequence belongs to the ZapD family. In terms of assembly, interacts with FtsZ.

Its subcellular location is the cytoplasm. Functionally, cell division factor that enhances FtsZ-ring assembly. Directly interacts with FtsZ and promotes bundling of FtsZ protofilaments, with a reduction in FtsZ GTPase activity. The sequence is that of Cell division protein ZapD from Klebsiella pneumoniae subsp. pneumoniae (strain ATCC 700721 / MGH 78578).